We begin with the raw amino-acid sequence, 67 residues long: Small ribosomal subunit protein bS21 (67 aa).

It belongs to the bacterial ribosomal protein bS21 family.

In Rhodospirillum centenum (strain ATCC 51521 / SW), this protein is Small ribosomal subunit protein bS21.